Reading from the N-terminus, the 82-residue chain is Delta-conotoxin-like CnVIA (82 aa).

The signal sequence occupies residues 1–22; it reads MKLTCMMIVAVLFLTAWTFVTA. Positions 23-49 are excised as a propeptide; the sequence is DDSRNGLENLSPKARHEMKNPEASKSN. Intrachain disulfides connect Cys-54–Cys-69, Cys-61–Cys-73, and Cys-68–Cys-78.

The protein belongs to the conotoxin O1 superfamily. Expressed by the venom duct.

It localises to the secreted. Its function is as follows. Delta-conotoxins bind to site 6 of voltage-gated sodium channels (Nav) and inhibit the inactivation process. This is Delta-conotoxin-like CnVIA from Conus consors (Singed cone).